Reading from the N-terminus, the 325-residue chain is RNA ligase 1 (325 aa).

Mg(2+) is required as a cofactor. Mn(2+) serves as cofactor. In terms of processing, AMPylates itself (auto-AMPylation).

The catalysed reaction is ATP + (ribonucleotide)n-3'-hydroxyl + 5'-phospho-(ribonucleotide)m = (ribonucleotide)n+m + AMP + diphosphate.. In terms of biological role, functions as an RNA ligase, in vitro. The ligation reaction entails three nucleotidyl transfer steps. In the first step, the RNA ligase reacts with ATP in the absence of nucleic acid to form a covalent ligase-AMP intermediate and release pyrophosphate. In step 2, the ligase-AMP binds to the nucleic acid and transfers the adenylate to the 5'-PO4 terminus to form an adenylylated intermediate. In step 3, the RNA ligase directs the attack of the 3'-OH on the 5'-phosphoanhydride linkage, resulting in a repaired 3'-5' phosphodiester and release of AMP. Exhibits selectivity for single-stranded RNA substrates and may not have nick-sealing activity on double-stranded DNA-RNA hybrids. May play a role in maintaining RNA integrity under stress conditions, for example in response to reactive oxygen species (ROS). The polypeptide is RNA ligase 1 (Pongo abelii (Sumatran orangutan)).